Here is a 463-residue protein sequence, read N- to C-terminus: POU domain, class 2, transcription factor 2 (463 aa).

Disordered regions lie at residues 1-87 (MVHS…QPHL), 159-182 (QPRAGLPTQPPKCLEPPSHPEEPS), 259-282 (SSLPSPNQLSSPSLGFDGLPGRRR), 341-376 (PCSAAPMLPSPGKPTSYSPHLVTPQGGAGTLPLSQA), and 393-463 (TLHP…PYQP). Residues 12 to 37 (RMSKPLEAEKQSLDSPSEHTDTERNG) show a composition bias toward basic and acidic residues. The segment covering 41-60 (NHQNPQNKASPFSVSPTGPS) has biased composition (polar residues). The segment covering 75-85 (AAPPPPQPAQP) has biased composition (pro residues). The 75-residue stretch at 179 to 253 (EEPSDLEELE…LLEKWLNDAE (75 aa)) folds into the POU-specific domain. The segment covering 259-272 (SSLPSPNQLSSPSL) has biased composition (low complexity). The homeobox DNA-binding region spans 281-340 (RRKKRTSIETNVRFALEKSFLANQKPTSEEILLIAEQLHMEKEVIRVWFCNRRQKEKRIN). Residues 373–394 (LSQASSSLSTTVTTLSSAVGTL) are leucine-zipper. Positions 400–409 (AGGGGGGGGA) are enriched in gly residues.

It belongs to the POU transcription factor family. Class-2 subfamily. In terms of assembly, interacts with NR3C1, AR and PGR. Interacts with POU2AF1; the interaction increases POU2F2 transactivation activity. In terms of tissue distribution, highest in B cells, but also present in brain (neuronal and glial cells), intestine, kidney, and testes. As to expression, expressed at higher levels in B-cells than in neuronal cells. Expressed in neuronal cell lines and brain, but not dorsal root ganglia. In terms of tissue distribution, expressed at lower levels in neuronal cells than in B cells. As to expression, expressed in neuronal cell lines, and at lower levels in neuroblastoma and dorsal root ganglia. Widely expressed in the developing nervous system but expression is confined to very specific regions in the adult brain, it is expressed at a lower level in B cells. In terms of tissue distribution, either absent in, or expressed at very low levels in neuronal cells and brain. As to expression, expressed in all tissues tested: mammary gland, liver, spleen, lung, kidney intestine, uterus and ovary of a virgin mouse. Levels of isoform OCT2.7 are highest in spleen and lung. In mammary gland, expression is localized to the alveolus epithelial cells.

The protein resides in the cytoplasm. Its subcellular location is the nucleus. Its activity is regulated as follows. Transactivation activity is enhanced by transcriptional coactivator POU2AF1. In terms of biological role, transcription factor that specifically binds to the octamer motif (5'-ATTTGCAT-3'). Regulates IL6 expression in B cells with POU2AF1. Regulates transcription in a number of tissues in addition to activating immunoglobulin gene expression. Modulates transcription transactivation by NR3C1, AR and PGR. Functionally, activates octamer-containing promoters. Represses some promoters and activate others. Its function is as follows. Represses some promoters and activate others. Activates the U2 small nuclear RNA (snRNA) promoter. In terms of biological role, unable to bind to the octamer motif, but can still activate the beta-casein gene promoter at low levels. The polypeptide is POU domain, class 2, transcription factor 2 (Mus musculus (Mouse)).